A 247-amino-acid polypeptide reads, in one-letter code: Triosephosphate isomerase (247 aa).

9 to 11 (NWK) contributes to the substrate binding site. Residue His-94 is the Electrophile of the active site. Glu-166 (proton acceptor) is an active-site residue. Substrate-binding positions include Gly-172, Ser-211, and 232–233 (GG).

It belongs to the triosephosphate isomerase family. Homodimer.

It localises to the cytoplasm. It catalyses the reaction D-glyceraldehyde 3-phosphate = dihydroxyacetone phosphate. It functions in the pathway carbohydrate biosynthesis; gluconeogenesis. Its pathway is carbohydrate degradation; glycolysis; D-glyceraldehyde 3-phosphate from glycerone phosphate: step 1/1. In terms of biological role, involved in the gluconeogenesis. Catalyzes stereospecifically the conversion of dihydroxyacetone phosphate (DHAP) to D-glyceraldehyde-3-phosphate (G3P). This Cupriavidus taiwanensis (strain DSM 17343 / BCRC 17206 / CCUG 44338 / CIP 107171 / LMG 19424 / R1) (Ralstonia taiwanensis (strain LMG 19424)) protein is Triosephosphate isomerase.